We begin with the raw amino-acid sequence, 314 residues long: Thymidylate synthase (314 aa).

Residues arginine 21 and 176–177 (RR) each bind dUMP. Catalysis depends on cysteine 196, which acts as the Nucleophile. DUMP is bound by residues 216–219 (RSAD), asparagine 227, and 257–259 (HLY). Residue aspartate 219 coordinates (6R)-5,10-methylene-5,6,7,8-tetrahydrofolate. Serine 313 is a (6R)-5,10-methylene-5,6,7,8-tetrahydrofolate binding site.

Belongs to the thymidylate synthase family. Bacterial-type ThyA subfamily. In terms of assembly, homodimer.

Its subcellular location is the cytoplasm. The enzyme catalyses dUMP + (6R)-5,10-methylene-5,6,7,8-tetrahydrofolate = 7,8-dihydrofolate + dTMP. It functions in the pathway pyrimidine metabolism; dTTP biosynthesis. In terms of biological role, catalyzes the reductive methylation of 2'-deoxyuridine-5'-monophosphate (dUMP) to 2'-deoxythymidine-5'-monophosphate (dTMP) while utilizing 5,10-methylenetetrahydrofolate (mTHF) as the methyl donor and reductant in the reaction, yielding dihydrofolate (DHF) as a by-product. This enzymatic reaction provides an intracellular de novo source of dTMP, an essential precursor for DNA biosynthesis. This chain is Thymidylate synthase, found in Listeria monocytogenes serotype 4b (strain CLIP80459).